A 490-amino-acid polypeptide reads, in one-letter code: Glutamate--tRNA ligase (490 aa).

Positions 12 to 22 (PSPTGTPHVGL) match the 'HIGH' region motif. A 'KMSKS' region motif is present at residues 256–260 (KLSKR). Lysine 259 is a binding site for ATP.

It belongs to the class-I aminoacyl-tRNA synthetase family. Glutamate--tRNA ligase type 1 subfamily. Monomer.

Its subcellular location is the cytoplasm. It carries out the reaction tRNA(Glu) + L-glutamate + ATP = L-glutamyl-tRNA(Glu) + AMP + diphosphate. Functionally, catalyzes the attachment of glutamate to tRNA(Glu) in a two-step reaction: glutamate is first activated by ATP to form Glu-AMP and then transferred to the acceptor end of tRNA(Glu). This Mycobacterium sp. (strain JLS) protein is Glutamate--tRNA ligase.